Consider the following 126-residue polypeptide: Translation initiation factor 5A (126 aa).

At lysine 36 the chain carries Hypusine.

It belongs to the eIF-5A family.

The protein resides in the cytoplasm. In terms of biological role, functions by promoting the formation of the first peptide bond. This Haloarcula marismortui (strain ATCC 43049 / DSM 3752 / JCM 8966 / VKM B-1809) (Halobacterium marismortui) protein is Translation initiation factor 5A.